A 573-amino-acid polypeptide reads, in one-letter code: Acyl-coenzyme A synthetase ACSM1, mitochondrial (573 aa).

The N-terminal 35 residues, 1–35 (MQWLKSFQICKVLQGFSLSPTQLHRRLFSRVGAPR), are a transit peptide targeting the mitochondrion. Lys81 carries the post-translational modification N6-succinyllysine. An N6-acetyllysine; alternate modification is found at Lys142. Lys142 bears the N6-succinyllysine; alternate mark. An N6-succinyllysine modification is found at Lys179. The residue at position 200 (Lys200) is an N6-acetyllysine; alternate. The residue at position 200 (Lys200) is an N6-succinyllysine; alternate. An N6-acetyllysine modification is found at Lys210. ATP is bound at residue 222 to 230 (TSGTTGYPK). An N6-succinyllysine mark is found at Lys233 and Lys324. N6-acetyllysine; alternate occurs at positions 352 and 387. N6-succinyllysine; alternate occurs at positions 352 and 387. Positions 448 and 463 each coordinate ATP. Lys501 bears the N6-succinyllysine mark. The residue at position 527 (Lys527) is an N6-acetyllysine. At Lys534 the chain carries N6-acetyllysine; alternate. An N6-succinyllysine; alternate modification is found at Lys534. N6-acetyllysine is present on Lys545. Residue Lys559 coordinates ATP.

The protein belongs to the ATP-dependent AMP-binding enzyme family. As to quaternary structure, monomer. Requires Mg(2+) as cofactor. Mn(2+) serves as cofactor. In terms of tissue distribution, highly expressed in liver and kidney.

The protein localises to the mitochondrion matrix. The protein resides in the mitochondrion. It carries out the reaction a medium-chain fatty acid + ATP + CoA = a medium-chain fatty acyl-CoA + AMP + diphosphate. The catalysed reaction is benzoate + ATP + CoA = benzoyl-CoA + AMP + diphosphate. It catalyses the reaction (R)-lipoate + GTP + H(+) = (R)-lipoyl-GMP + diphosphate. The enzyme catalyses octanoate + ATP + CoA = octanoyl-CoA + AMP + diphosphate. It carries out the reaction decanoate + ATP + CoA = decanoyl-CoA + AMP + diphosphate. The catalysed reaction is dodecanoate + ATP + CoA = dodecanoyl-CoA + AMP + diphosphate. It catalyses the reaction tetradecanoate + ATP + CoA = tetradecanoyl-CoA + AMP + diphosphate. The enzyme catalyses hexanoate + ATP + CoA = hexanoyl-CoA + AMP + diphosphate. It carries out the reaction butanoate + ATP + CoA = butanoyl-CoA + AMP + diphosphate. The catalysed reaction is hexadecanoate + ATP + CoA = hexadecanoyl-CoA + AMP + diphosphate. Functionally, catalyzes the activation of fatty acids by CoA to produce an acyl-CoA, the first step in fatty acid metabolism. Capable of activating medium-chain fatty acids (e.g. butyric (C4) to decanoic (C10) acids), and certain carboxylate-containing xenobiotics, e.g. benzoate. Also catalyzes the activation of lipoate to lipoyl-nucleoside monophosphate. Activates lipoate with GTP at a 1000-fold higher rate than with ATP and activates both (R)- and (S)-lipoate to the respective lipoyl-GMP, with a preference for (R)-lipoate. In Mus musculus (Mouse), this protein is Acyl-coenzyme A synthetase ACSM1, mitochondrial (Acsm1).